A 255-amino-acid chain; its full sequence is Hemin import ATP-binding protein HmuV (255 aa).

Residues 2–238 enclose the ABC transporter domain; sequence LRVENLSIRR…EPLRAVFGLE (237 aa). 34–41 provides a ligand contact to ATP; sequence GPNGAGKS.

The protein belongs to the ABC transporter superfamily. Heme (hemin) importer (TC 3.A.1.14.5) family. As to quaternary structure, the complex is composed of two ATP-binding proteins (HmuV), two transmembrane proteins (HmuU) and a solute-binding protein (HmuT).

The protein localises to the cell inner membrane. Its function is as follows. Part of the ABC transporter complex HmuTUV involved in hemin import. Responsible for energy coupling to the transport system. This chain is Hemin import ATP-binding protein HmuV, found in Pseudomonas aeruginosa (strain ATCC 15692 / DSM 22644 / CIP 104116 / JCM 14847 / LMG 12228 / 1C / PRS 101 / PAO1).